A 272-amino-acid chain; its full sequence is Small ribosomal subunit protein uS3 (272 aa).

The KH type-2 domain maps to 43 to 111 (IRELMTTGME…QIQLNILEVK (69 aa)). Residues 218 to 272 (AKEAAQPSGRGRGGERRGGGERRRRNDRAERAPRQENAGAGAETPAAAPAEGGNA) are disordered. Positions 229-238 (RGGERRGGGE) are enriched in basic and acidic residues. Over residues 253-272 (ENAGAGAETPAAAPAEGGNA) the composition is skewed to low complexity.

This sequence belongs to the universal ribosomal protein uS3 family. As to quaternary structure, part of the 30S ribosomal subunit. Forms a tight complex with proteins S10 and S14.

Binds the lower part of the 30S subunit head. Binds mRNA in the 70S ribosome, positioning it for translation. This chain is Small ribosomal subunit protein uS3, found in Micrococcus luteus (strain ATCC 4698 / DSM 20030 / JCM 1464 / CCM 169 / CCUG 5858 / IAM 1056 / NBRC 3333 / NCIMB 9278 / NCTC 2665 / VKM Ac-2230) (Micrococcus lysodeikticus).